We begin with the raw amino-acid sequence, 166 residues long: Large ribosomal subunit protein uL10 (166 aa).

This sequence belongs to the universal ribosomal protein uL10 family. As to quaternary structure, part of the ribosomal stalk of the 50S ribosomal subunit. The N-terminus interacts with L11 and the large rRNA to form the base of the stalk. The C-terminus forms an elongated spine to which L12 dimers bind in a sequential fashion forming a multimeric L10(L12)X complex.

Its function is as follows. Forms part of the ribosomal stalk, playing a central role in the interaction of the ribosome with GTP-bound translation factors. The polypeptide is Large ribosomal subunit protein uL10 (Azotobacter vinelandii (strain DJ / ATCC BAA-1303)).